Reading from the N-terminus, the 304-residue chain is Dermonecrotic toxin LlSicTox-betaIA1 (304 aa).

The first 21 residues, 1-21 (MLLSAVISFIGFAAFLQEANG), serve as a signal peptide directing secretion. Residues 22–26 (HVVER) constitute a propeptide that is removed on maturation. His38 is an active-site residue. The Mg(2+) site is built by Glu58 and Asp60. Residue His74 is the Nucleophile of the active site. 2 disulfide bridges follow: Cys78–Cys84 and Cys80–Cys223. Asp118 lines the Mg(2+) pocket.

The protein belongs to the arthropod phospholipase D family. Class II subfamily. Class IIb sub-subfamily. Requires Mg(2+) as cofactor. Expressed by the venom gland.

The protein resides in the secreted. It carries out the reaction an N-(acyl)-sphingosylphosphocholine = an N-(acyl)-sphingosyl-1,3-cyclic phosphate + choline. The enzyme catalyses an N-(acyl)-sphingosylphosphoethanolamine = an N-(acyl)-sphingosyl-1,3-cyclic phosphate + ethanolamine. The catalysed reaction is a 1-acyl-sn-glycero-3-phosphocholine = a 1-acyl-sn-glycero-2,3-cyclic phosphate + choline. It catalyses the reaction a 1-acyl-sn-glycero-3-phosphoethanolamine = a 1-acyl-sn-glycero-2,3-cyclic phosphate + ethanolamine. In terms of biological role, dermonecrotic toxins cleave the phosphodiester linkage between the phosphate and headgroup of certain phospholipids (sphingolipid and lysolipid substrates), forming an alcohol (often choline) and a cyclic phosphate. This toxin acts on sphingomyelin (SM) with low activity. It may also act on ceramide phosphoethanolamine (CPE), lysophosphatidylcholine (LPC) and lysophosphatidylethanolamine (LPE), but not on lysophosphatidylserine (LPS), and lysophosphatidylglycerol (LPG). It acts by transphosphatidylation, releasing exclusively cyclic phosphate products as second products. Induces hemolysis, dermonecrosis, and edema. Also induces platelet aggregation. This is Dermonecrotic toxin LlSicTox-betaIA1 from Loxosceles laeta (South American recluse spider).